A 401-amino-acid chain; its full sequence is Homocitrate synthase (401 aa).

Positions 22 to 271 (VRFCDTTLRD…KLPIDLDTTS (250 aa)) constitute a Pyruvate carboxyltransferase domain. A disordered region spans residues 367–401 (TRHKRGLDSRDLPGTSRAGRDAGPRAGTPTREEPV).

It belongs to the alpha-IPM synthase/homocitrate synthase family.

The catalysed reaction is acetyl-CoA + 2-oxoglutarate + H2O = (2R)-homocitrate + CoA + H(+). This protein is a Fe-Mo-cofactor biosynthetic component. This chain is Homocitrate synthase (nifV), found in Frankia sp. (strain FaC1).